The chain runs to 354 residues: Serum paraoxonase/lactonase 3 (354 aa).

The cysteines at positions 42 and 352 are disulfide-linked. Asn-50 carries an N-linked (GlcNAc...) asparagine glycan. Residues Glu-53 and Asp-54 each coordinate Ca(2+). The active-site Proton acceptor is His-114. Ile-116 contacts Ca(2+). Ser-165 is subject to Phosphoserine. 5 residues coordinate Ca(2+): Asn-167, Asp-168, Asn-223, Asp-268, and Asn-269. Residues Asn-269 and Asn-323 are each glycosylated (N-linked (GlcNAc...) asparagine).

This sequence belongs to the paraoxonase family. Homodimer. Requires Ca(2+) as cofactor. Glycosylated. Post-translationally, the signal sequence is not cleaved.

It localises to the secreted. It is found in the extracellular space. It carries out the reaction a phenyl acetate + H2O = a phenol + acetate + H(+). The enzyme catalyses An aryl dialkyl phosphate + H2O = dialkyl phosphate + an aryl alcohol.. It catalyses the reaction an N-acyl-L-homoserine lactone + H2O = an N-acyl-L-homoserine + H(+). Has low activity towards the organophosphate paraxon and aromatic carboxylic acid esters. Rapidly hydrolyzes lactones such as statin prodrugs (e.g. lovastatin). Hydrolyzes aromatic lactones and 5- or 6-member ring lactones with aliphatic substituents but not simple lactones or those with polar substituents. The chain is Serum paraoxonase/lactonase 3 (Pon3) from Mus musculus (Mouse).